The chain runs to 1812 residues: Protein virilizer homolog (1812 aa).

Ala2 is subject to N-acetylalanine. 2 disordered regions span residues 132 to 302 (ISHD…EQIS) and 576 to 596 (KTSS…GLER). Ser133 and Ser138 each carry phosphoserine. Positions 139-152 (PPPPPPPPPPPQPQ) are enriched in pro residues. Basic and acidic residues predominate over residues 160-169 (KHADGEKEDQ). Residue Ser173 is modified to Phosphoserine. A compositionally biased stretch (pro residues) spans 174–190 (PPRPQPRGPRTPPGPPP). A Phosphothreonine modification is found at Thr184. Residue Ser222 is modified to Phosphoserine. Residues 224–233 (DRNSVPQEGQ) show a composition bias toward polar residues. Acidic residues-rich tracts occupy residues 234–266 (YSDE…EDED) and 274–302 (IPEE…EQIS). Basic and acidic residues predominate over residues 584-596 (SEPDHDTDAGLER). At Tyr914 the chain carries Phosphotyrosine. Phosphoserine is present on Ser1579. Disordered stretches follow at residues 1616–1635 (HVVP…GIRP) and 1663–1812 (KEVV…SFTR). Over residues 1689 to 1698 (GFSGNRGGRG) the composition is skewed to gly residues. At Thr1708 the chain carries Phosphothreonine. Arg1723 is subject to Omega-N-methylarginine. The segment covering 1723 to 1748 (RGSSWSAQNTPRGNYNESRGGQSNFN) has biased composition (polar residues). Arg1741 is subject to Asymmetric dimethylarginine; alternate. Arg1741 is modified (omega-N-methylarginine; alternate). An asymmetric dimethylarginine mark is found at Arg1773, Arg1775, and Arg1793. A compositionally biased stretch (gly residues) spans 1788–1802 (GSGGSRGKFVSGGSG). The span at 1803–1812 (RGRHVRSFTR) shows a compositional bias: basic residues.

This sequence belongs to the vir family. As to quaternary structure, component of the WMM complex, a N6-methyltransferase complex composed of a catalytic subcomplex, named MAC, and of an associated subcomplex, named MACOM. The MAC subcomplex is composed of METTL3 and METTL14. The MACOM subcomplex is composed of WTAP, ZC3H13, CBLL1/HAKAI, VIRMA, and, in some cases of RBM15 (RBM15 or RBM15B). Interacts with WTAP. Also a component of a MACOM-like complex, named WTAP complex, composed of WTAP, ZC3H13, CBLL1, VIRMA, RBM15, BCLAF1 and THRAP3. Interacts with NUDT21 and CPSF6.

The protein localises to the nucleus speckle. The protein resides in the nucleus. It localises to the nucleoplasm. Its subcellular location is the cytoplasm. Functionally, associated component of the WMM complex, a complex that mediates N6-methyladenosine (m6A) methylation of RNAs, a modification that plays a role in the efficiency of mRNA splicing and RNA processing. Acts as a key regulator of m6A methylation by promoting m6A methylation of mRNAs in the 3'-UTR near the stop codon: recruits the catalytic core components METTL3 and METTL14, thereby guiding m6A methylation at specific sites. Required for mRNA polyadenylation via its role in selective m6A methylation: m6A methylation of mRNAs in the 3'-UTR near the stop codon correlating with alternative polyadenylation (APA). The sequence is that of Protein virilizer homolog from Homo sapiens (Human).